Reading from the N-terminus, the 473-residue chain is BPI fold-containing family B member 3 (473 aa).

The first 20 residues, M1–G20, serve as a signal peptide directing secretion. An N-linked (GlcNAc...) asparagine glycan is attached at N139. C161 and C196 are disulfide-bonded.

Belongs to the BPI/LBP/Plunc superfamily. BPI/LBP family. As to expression, highly expressed in olfactory mucosa but undetectable in thymus, kidney, lung, brain, spleen and liver.

Its subcellular location is the secreted. In terms of biological role, may have the capacity to recognize and bind specific classes of odorants. May act as a carrier molecule, transporting odorants across the mucus layer to access receptor sites. May serve as a primary defense mechanism by recognizing and removing potentially harmful odorants or pathogenic microorganisms from the mucosa or clearing excess odorant from mucus to enable new odorant stimuli to be received. The chain is BPI fold-containing family B member 3 from Rattus norvegicus (Rat).